A 647-amino-acid polypeptide reads, in one-letter code: Putative ankyrin repeat protein L764 (647 aa).

ANK repeat units lie at residues 123 to 154 (LKDREIYLNSNCDDINLIKFIVTRNDYFQINL), 202 to 231 (LTQEHIKLAVQNRKIPVLEHLINLGIEYDL), 233 to 256 (EIINDIKDFDILKYMLEIGNSLNE), 258 to 284 (NVNIIIFNIHTTQLIEYLMNLGYTINS), 289 to 319 (SMFSHMLIVSENTDIVEFLKSINAKDSDLTV), 348 to 377 (DCNLFLKYAIISQDIPNIEYSINKGADLKK), 401 to 431 (NDVNNFILKIIENDCIETLKYLVDNNYNIDL), 529 to 558 (FILKEFPEECSSEKMDTIKFLLDFNADNNE), and 588 to 617 (NGQNIVEYLISDGDHEIFRYLYYNGFDVKN).

The chain is Putative ankyrin repeat protein L764 from Acanthamoeba polyphaga (Amoeba).